The primary structure comprises 467 residues: Serine/threonine-protein phosphatase 2A 56 kDa regulatory subunit epsilon isoform (467 aa).

Positions 1–39 (MSSAPTTPPSVDKVDGFSRKSVRKARQKRSQSSSQFRSQ) are disordered. Serine 2 is subject to N-acetylserine. The residue at position 7 (threonine 7) is a Phosphothreonine. Over residues 20-29 (KSVRKARQKR) the composition is skewed to basic residues. Serine 30, serine 32, and serine 34 each carry phosphoserine. The span at 30-39 (SQSSSQFRSQ) shows a compositional bias: low complexity.

This sequence belongs to the phosphatase 2A regulatory subunit B56 family. PP2A consists of a common heterodimeric core enzyme, composed of a 36 kDa catalytic subunit (subunit C) and a 65 kDa constant regulatory subunit (PR65 or subunit A), that associates with a variety of regulatory subunits. Proteins that associate with the core dimer include three families of regulatory subunits B (the R2/B/PR55/B55, R3/B''/PR72/PR130/PR59 and R5/B'/B56 families), the 48 kDa variable regulatory subunit, viral proteins, and cell signaling molecules. Interacts with SGO1. Found in a complex with at least ARL2, PPP2CB; PPP2R1A, PPP2R2A, PPP2R5E and TBCD.

The protein resides in the cytoplasm. The B regulatory subunit might modulate substrate selectivity and catalytic activity, and might also direct the localization of the catalytic enzyme to a particular subcellular compartment. Interacts with cyclin G in vitro. The protein is Serine/threonine-protein phosphatase 2A 56 kDa regulatory subunit epsilon isoform (Ppp2r5e) of Mus musculus (Mouse).